The primary structure comprises 461 residues: Porin AaxA (461 aa).

An N-terminal signal peptide occupies residues 1 to 22; sequence MSFRSVLLTALLSLSFTTTMQA.

Belongs to the OprB family.

The protein localises to the cell outer membrane. Its function is as follows. Facilitates L-arginine uptake, as part of the AaxABC system. The arginine uptake by the bacterium in the macrophage may be a virulence factor against the host innate immune response. This Chlamydia trachomatis serovar A (strain ATCC VR-571B / DSM 19440 / HAR-13) protein is Porin AaxA (aaxA).